Reading from the N-terminus, the 277-residue chain is R-spondin-3 (277 aa).

The signal sequence occupies residues 1-21 (MHLRLISCFFIILNFMEYIGS). FU repeat units lie at residues 35–86 (PNVS…GYYG) and 92–135 (INKC…GLEA). Asn36 carries an N-linked (GlcNAc...) asparagine glycan. Intrachain disulfides connect Cys41–Cys48, Cys45–Cys54, Cys57–Cys76, Cys80–Cys95, Cys98–Cys105, Cys102–Cys111, Cys114–Cys125, Cys129–Cys142, Cys148–Cys190, Cys159–Cys166, and Cys199–Cys206. A TSP type-1 domain is found at 147-207 (HCEASEWSPW…TCIVQRKKCS (61 aa)). The interval 210–277 (ERGKKGRERK…QKSVSVSTVH (68 aa)) is disordered. Basic residues predominate over residues 213–223 (KKGRERKRKKL). Residues 232–245 (SSSSDSKGLESSIE) are compositionally biased toward low complexity.

Belongs to the R-spondin family. In terms of assembly, interacts with the extracellular domain of FZD8 and LRP6. It however does not form a ternary complex with FZD8 and LRP6. Interacts with WNT1. Binds heparin. Interacts with LGR4, LGR5 and LGR6. Highly expressed in endothelial cells.

Its subcellular location is the secreted. Its function is as follows. Activator of the canonical Wnt signaling pathway by acting as a ligand for LGR4-6 receptors, which acts as a key regulator of angiogenesis. Upon binding to LGR4-6 (LGR4, LGR5 or LGR6), LGR4-6 associate with phosphorylated LRP6 and frizzled receptors that are activated by extracellular Wnt receptors, triggering the canonical Wnt signaling pathway to increase expression of target genes. Also regulates the canonical Wnt/beta-catenin-dependent pathway and non-canonical Wnt signaling by acting as an inhibitor of ZNRF3, an important regulator of the Wnt signaling pathway. Acts as a ligand for frizzled FZD8 and LRP6. May negatively regulate the TGF-beta pathway. Acts as a key regulator of angiogenesis by controlling vascular stability and pruning: acts by activating the non-canonical Wnt signaling pathway in endothelial cells. Can also amplify Wnt signaling pathway independently of LGR4-6 receptors, possibly by acting as a direct antagonistic ligand to RNF43 and ZNRF3. The chain is R-spondin-3 (Rspo3) from Mus musculus (Mouse).